Here is a 121-residue protein sequence, read N- to C-terminus: Large ribosomal subunit protein bL19 (121 aa).

Belongs to the bacterial ribosomal protein bL19 family.

Its function is as follows. This protein is located at the 30S-50S ribosomal subunit interface and may play a role in the structure and function of the aminoacyl-tRNA binding site. The protein is Large ribosomal subunit protein bL19 of Symbiobacterium thermophilum (strain DSM 24528 / JCM 14929 / IAM 14863 / T).